A 268-amino-acid chain; its full sequence is Sexual development regulator velC (268 aa).

Residues Met-1–Pro-13 are compositionally biased toward basic and acidic residues. Disordered stretches follow at residues Met-1–Ser-124 and Asp-142–His-165. Over residues Glu-14–Arg-26 the composition is skewed to pro residues. One can recognise a Velvet domain in the interval Ser-28–Arg-257. Residues Asp-92 to Asp-121 show a composition bias toward basic and acidic residues.

The protein belongs to the velvet family. VelC subfamily. As to quaternary structure, interacts with velA and vosA.

The protein localises to the nucleus. Its function is as follows. Velvet-domain-containing protein that acts as a positive regulator of sexual development. In Penicillium rubens (strain ATCC 28089 / DSM 1075 / NRRL 1951 / Wisconsin 54-1255) (Penicillium chrysogenum), this protein is Sexual development regulator velC.